We begin with the raw amino-acid sequence, 609 residues long: Ovochymase-2 (609 aa).

The N-terminal stretch at methionine 1 to serine 22 is a signal peptide. The propeptide at glutamate 23–arginine 51 is activation peptide. A Peptidase S1 domain is found at isoleucine 52–glutamine 299. Cysteines 77 and 93 form a disulfide. Histidine 92 acts as the Charge relay system in catalysis. N-linked (GlcNAc...) asparagine glycosylation occurs at asparagine 104. Glutamate 119 lines the Ca(2+) pocket. Aspartate 142 acts as the Charge relay system in catalysis. 4 cysteine pairs are disulfide-bonded: cysteine 176–cysteine 246, cysteine 207–cysteine 225, cysteine 236–cysteine 265, and cysteine 311–cysteine 341. The Charge relay system role is filled by serine 240. CUB domains lie at cysteine 311–leucine 421 and cysteine 431–isoleucine 543. Asparagine 356 carries N-linked (GlcNAc...) asparagine glycosylation. Residues cysteine 365 and cysteine 384 are joined by a disulfide bond. An N-linked (GlcNAc...) asparagine glycan is attached at asparagine 415. 2 cysteine pairs are disulfide-bonded: cysteine 431-cysteine 458 and cysteine 485-cysteine 506. 2 N-linked (GlcNAc...) asparagine glycosylation sites follow: asparagine 530 and asparagine 549. Positions histidine 580–histidine 609 are disordered.

The protein belongs to the peptidase S1 family. Only expressed in uterus tissue. Expressed in the initial segment (IS) of the caput epididymis, the region most proximal to the testis.

Its subcellular location is the secreted. Functionally, may be required for sperm ADAM3 processing and consequential sperm fertilizing ability. In vitro, has an endopeptidase activity. In Mus musculus (Mouse), this protein is Ovochymase-2.